Consider the following 72-residue polypeptide: Large ribosomal subunit protein bL31 (72 aa).

Zn(2+) is bound by residues C16, C18, C38, and C41.

It belongs to the bacterial ribosomal protein bL31 family. Type A subfamily. As to quaternary structure, part of the 50S ribosomal subunit. Zn(2+) is required as a cofactor.

Its function is as follows. Binds the 23S rRNA. The sequence is that of Large ribosomal subunit protein bL31 from Azoarcus sp. (strain BH72).